The chain runs to 293 residues: Xylanase inhibitor protein XIP (293 aa).

A signal peptide spans Met1–Ala21. Positions Gly31–Leu293 constitute a GH18 domain. Disulfide bonds link Cys50/Cys92 and Cys189/Cys218.

It belongs to the glycosyl hydrolase 18 family. Xylanase inhibitor subfamily. Expressed in mature grain.

The protein localises to the secreted. Fungal xylanase inhibitor. Possesses competitive inhibiting activity against several fungal endo-1,4-beta-D-xylanases belonging to glycoside hydrolase family 10 (GH10) and family 11 (GH11). May function in plant defense against secreted fungal pathogen xylanases. Is similar to class III chitinases, but does not exhibit chitinase activity. This is Xylanase inhibitor protein XIP from Oryza sativa subsp. japonica (Rice).